An 83-amino-acid polypeptide reads, in one-letter code: Cytochrome b559 subunit alpha (83 aa).

A helical transmembrane segment spans residues V21 to W35. H23 contacts heme.

It belongs to the PsbE/PsbF family. As to quaternary structure, heterodimer of an alpha subunit and a beta subunit. PSII is composed of 1 copy each of membrane proteins PsbA, PsbB, PsbC, PsbD, PsbE, PsbF, PsbH, PsbI, PsbJ, PsbK, PsbL, PsbM, PsbT, PsbX, PsbY, PsbZ, Psb30/Ycf12, at least 3 peripheral proteins of the oxygen-evolving complex and a large number of cofactors. It forms dimeric complexes. Heme b is required as a cofactor.

It localises to the plastid. It is found in the chloroplast thylakoid membrane. This b-type cytochrome is tightly associated with the reaction center of photosystem II (PSII). PSII is a light-driven water:plastoquinone oxidoreductase that uses light energy to abstract electrons from H(2)O, generating O(2) and a proton gradient subsequently used for ATP formation. It consists of a core antenna complex that captures photons, and an electron transfer chain that converts photonic excitation into a charge separation. The protein is Cytochrome b559 subunit alpha of Chlorella vulgaris (Green alga).